The primary structure comprises 446 residues: WEB family protein At3g56270 (446 aa).

Residues 313 to 349 are a coiled coil; that stretch reads TNVSRIEILRKLEEANEEVKQSKQALEVALNRVEIAS.

It belongs to the WEB family.

This is WEB family protein At3g56270 from Arabidopsis thaliana (Mouse-ear cress).